A 224-amino-acid chain; its full sequence is Cytidylate kinase (224 aa).

11 to 19 is an ATP binding site; the sequence is GPASAGKST.

The protein belongs to the cytidylate kinase family. Type 1 subfamily.

Its subcellular location is the cytoplasm. The enzyme catalyses CMP + ATP = CDP + ADP. It catalyses the reaction dCMP + ATP = dCDP + ADP. In Ligilactobacillus salivarius (strain UCC118) (Lactobacillus salivarius), this protein is Cytidylate kinase.